The following is a 166-amino-acid chain: Protein-export protein SecB (166 aa).

This sequence belongs to the SecB family. In terms of assembly, homotetramer, a dimer of dimers. One homotetramer interacts with 1 SecA dimer.

It localises to the cytoplasm. One of the proteins required for the normal export of preproteins out of the cell cytoplasm. It is a molecular chaperone that binds to a subset of precursor proteins, maintaining them in a translocation-competent state. It also specifically binds to its receptor SecA. The protein is Protein-export protein SecB of Roseobacter denitrificans (strain ATCC 33942 / OCh 114) (Erythrobacter sp. (strain OCh 114)).